The primary structure comprises 458 residues: tRNA modification GTPase MnmE (458 aa).

Arg-22, Glu-84, and Arg-123 together coordinate (6S)-5-formyl-5,6,7,8-tetrahydrofolate. The TrmE-type G domain maps to 220-379 (GIATAIIGRP…LETAIADLFF (160 aa)). Asn-230 serves as a coordination point for K(+). Residues 230-235 (NVGKSS), 249-255 (TDIAGTT), and 274-277 (DTAG) contribute to the GTP site. Ser-234 provides a ligand contact to Mg(2+). K(+)-binding residues include Thr-249, Ile-251, and Thr-254. Thr-255 contacts Mg(2+). Lys-458 serves as a coordination point for (6S)-5-formyl-5,6,7,8-tetrahydrofolate.

Belongs to the TRAFAC class TrmE-Era-EngA-EngB-Septin-like GTPase superfamily. TrmE GTPase family. Homodimer. Heterotetramer of two MnmE and two MnmG subunits. The cofactor is K(+).

The protein localises to the cytoplasm. In terms of biological role, exhibits a very high intrinsic GTPase hydrolysis rate. Involved in the addition of a carboxymethylaminomethyl (cmnm) group at the wobble position (U34) of certain tRNAs, forming tRNA-cmnm(5)s(2)U34. The sequence is that of tRNA modification GTPase MnmE from Bacillus cereus (strain ATCC 10987 / NRS 248).